Consider the following 218-residue polypeptide: Protein-L-isoaspartate O-methyltransferase (218 aa).

Residue serine 66 is part of the active site.

This sequence belongs to the methyltransferase superfamily. L-isoaspartyl/D-aspartyl protein methyltransferase family.

The protein localises to the cytoplasm. The catalysed reaction is [protein]-L-isoaspartate + S-adenosyl-L-methionine = [protein]-L-isoaspartate alpha-methyl ester + S-adenosyl-L-homocysteine. In terms of biological role, catalyzes the methyl esterification of L-isoaspartyl residues in peptides and proteins that result from spontaneous decomposition of normal L-aspartyl and L-asparaginyl residues. It plays a role in the repair and/or degradation of damaged proteins. The sequence is that of Protein-L-isoaspartate O-methyltransferase from Caulobacter sp. (strain K31).